Consider the following 495-residue polypeptide: MNYLVLILVSLVSIYFLFIKNQDRKKKINSKIPGPKGFLFGNLIELARTKKNLHLKYLEWFEKYGPVFRVSIGSLETVVLTGYPILREAFIDNSDTFTSRFQRENARSINGYKGLINSNGDYHKNLKSVILSEMTATKIKKMESHINQESKRLCELLDQHAKQGTPFTMNKYLNLFSINIILRFLFGVNYPYTELDDGSSSIIQVIQQFLKLVSQPSITTYFPILSPFMNDRSKEFYDIHKLLSNHIINLIERYKDSKQHQQQEQEPIDGATEPTVTILDKLLIEVENNRITQNALISICIDVLIAGTDTVGQTLSFAIVALVNNAEIQEKLSRNIIDSMEKGDNHYSYSKYRNGIPYLALVVKEVFRMYPAGILGLPHMTSEDCEIQGHKIAKGTQIIQNIYSTHRSESFWPNPNNFIPERHIQNDVSKSVHFAVGTRNCMGMSLSEAEVHTAMAELFGNFKFTNPSNIPLNDQGTFSVALNCPDFFVKIERRN.

The chain crosses the membrane as a helical span at residues 1 to 21; it reads MNYLVLILVSLVSIYFLFIKN. Residue cysteine 441 coordinates heme.

The protein belongs to the cytochrome P450 family. The cofactor is heme.

It is found in the membrane. This is Probable cytochrome P450 513C1 (cyp513C1) from Dictyostelium discoideum (Social amoeba).